Here is a 291-residue protein sequence, read N- to C-terminus: ATP synthase gamma chain (291 aa).

The protein belongs to the ATPase gamma chain family. As to quaternary structure, F-type ATPases have 2 components, CF(1) - the catalytic core - and CF(0) - the membrane proton channel. CF(1) has five subunits: alpha(3), beta(3), gamma(1), delta(1), epsilon(1). CF(0) has three main subunits: a, b and c.

The protein localises to the cell inner membrane. Its function is as follows. Produces ATP from ADP in the presence of a proton gradient across the membrane. The gamma chain is believed to be important in regulating ATPase activity and the flow of protons through the CF(0) complex. This Syntrophus aciditrophicus (strain SB) protein is ATP synthase gamma chain.